Reading from the N-terminus, the 534-residue chain is Serine/threonine-protein kinase Nek6 (534 aa).

In terms of domain architecture, Protein kinase spans 4-257; the sequence is YEVVEQIGRG…AGELLRHPYL (254 aa). ATP-binding positions include 10 to 18 and Lys33; that span reads IGRGAYGSA. The active-site Proton acceptor is Asp129. Disordered regions lie at residues 278–306 and 425–449; these read KSNLGDKQQSRKPGSGRKRIIKTNGSSEA and KAHTHQGSKPGTGDVPIVTEESSPK.

It belongs to the protein kinase superfamily. NEK Ser/Thr protein kinase family. NIMA subfamily. In terms of assembly, interacts with DIS1. Post-translationally, ubiquitinated by the E3 ligase DIS1. Ubiquitination of NEK6 leads to its degradation via the 26S proteasome-dependent pathway. Expressed in anthers, pistils and leaves.

Its subcellular location is the cytoplasm. It carries out the reaction L-seryl-[protein] + ATP = O-phospho-L-seryl-[protein] + ADP + H(+). The enzyme catalyses L-threonyl-[protein] + ATP = O-phospho-L-threonyl-[protein] + ADP + H(+). May be involved in plant development processes. This is Serine/threonine-protein kinase Nek6 from Oryza sativa subsp. japonica (Rice).